Here is a 560-residue protein sequence, read N- to C-terminus: Formate--tetrahydrofolate ligase (560 aa).

ATP is bound at residue 69-76 (TPAGEGKS).

It belongs to the formate--tetrahydrofolate ligase family.

The catalysed reaction is (6S)-5,6,7,8-tetrahydrofolate + formate + ATP = (6R)-10-formyltetrahydrofolate + ADP + phosphate. The protein operates within one-carbon metabolism; tetrahydrofolate interconversion. The polypeptide is Formate--tetrahydrofolate ligase (Listeria monocytogenes serotype 4a (strain HCC23)).